The primary structure comprises 394 residues: MAKAKFERNKPHVNVGTIGHVDHGKTTLTAAISHVLAKTYGGEAKDFSQIDNAPEERERGITINTSHIEYDTPTRHYAHVDCPGHADYVKNMITGAAQMDGAILVVASTDGPMPQTREHILLSRQVGVPFIIVFMNKCDMVDDAELLELVEMEVRELLSEYDFPGDDLPVIQGSALKALEGEPEWEAKIIELAEALDSYIPEPERDIDKPFLMPIEDVFSISGRGTVVTGRVERGIVRVGDEVEIVGIRATTKTTCTGVEMFRKLLDEGRAGENCGILLRGTKRDDVERGQVLSKPGSINPHTTFESEVYVLSKEEGGRHTPFFKGYRPQFYFRTTDVTGTIELPEGVEMVMPGDNIKMKVTLICPIAMDEGLRFAIREGGRTVGAGVVAKIFA.

The 195-residue stretch at 10-204 (KPHVNVGTIG…ALDSYIPEPE (195 aa)) folds into the tr-type G domain. The tract at residues 19–26 (GHVDHGKT) is G1. 19–26 (GHVDHGKT) provides a ligand contact to GTP. Threonine 26 is a binding site for Mg(2+). The tract at residues 60 to 64 (GITIN) is G2. Positions 81–84 (DCPG) are G3. Residues 81-85 (DCPGH) and 136-139 (NKCD) contribute to the GTP site. The interval 136-139 (NKCD) is G4. Positions 174 to 176 (SAL) are G5.

This sequence belongs to the TRAFAC class translation factor GTPase superfamily. Classic translation factor GTPase family. EF-Tu/EF-1A subfamily. As to quaternary structure, monomer.

The protein localises to the cytoplasm. The enzyme catalyses GTP + H2O = GDP + phosphate + H(+). Its function is as follows. GTP hydrolase that promotes the GTP-dependent binding of aminoacyl-tRNA to the A-site of ribosomes during protein biosynthesis. The protein is Elongation factor Tu 1 of Shewanella sp. (strain MR-4).